The chain runs to 306 residues: Immune protein Tsi7 (306 aa).

In terms of assembly, interacts with Tse7.

Immunity protein that plays a role in preventing early activation of toxin Tse7. Protects thereby cells from Tse7 DNase activity. The chain is Immune protein Tsi7 from Pseudomonas aeruginosa (strain ATCC 15692 / DSM 22644 / CIP 104116 / JCM 14847 / LMG 12228 / 1C / PRS 101 / PAO1).